We begin with the raw amino-acid sequence, 127 residues long: Small ribosomal subunit protein uS11 (127 aa).

This sequence belongs to the universal ribosomal protein uS11 family. In terms of assembly, part of the 30S ribosomal subunit. Interacts with proteins S7 and S18. Binds to IF-3.

Its function is as follows. Located on the platform of the 30S subunit, it bridges several disparate RNA helices of the 16S rRNA. Forms part of the Shine-Dalgarno cleft in the 70S ribosome. In Rickettsia prowazekii (strain Madrid E), this protein is Small ribosomal subunit protein uS11.